A 218-amino-acid polypeptide reads, in one-letter code: ADP-sugar pyrophosphatase (218 aa).

M1 carries the N-acetylmethionine modification. S10 is modified (phosphoserine). W27 lines the substrate pocket. A Glycyl lysine isopeptide (Lys-Gly) (interchain with G-Cter in SUMO2) cross-link involves residue K41. T44 bears the Phosphothreonine mark. Substrate-binding positions include 45-46 and R83; that span reads WE. In terms of domain architecture, Nudix hydrolase spans 56 to 196; it reads KSADAVSVIP…EQHLTVDAKV (141 aa). Position 95 (A95) interacts with Mg(2+). Residues 96–117 carry the Nudix box motif; that stretch reads GFIEDGESPEAAALRELEEETG. F97 lines the substrate pocket. Mg(2+) contacts are provided by E111 and E115. A substrate-binding site is contributed by D132. Position 165 (E165) interacts with Mg(2+). Residues K209 and K217 each carry the N6-acetyllysine modification.

It belongs to the Nudix hydrolase family. In terms of assembly, homodimer. Interacts with PARG. The cofactor is Mg(2+). Post-translationally, phosphorylation at Thr-44 is required for homodimer stability; dephosphorylation results in destabilization of the homodimer. Dephosphorylation at Thr-44 promotes the ATP-synthesis activity. In terms of tissue distribution, widely expressed. Most abundant in liver.

Its subcellular location is the nucleus. It carries out the reaction D-ribose 5-phosphate + ATP + H(+) = ADP-D-ribose + diphosphate. The catalysed reaction is ADP-D-ribose + H2O = D-ribose 5-phosphate + AMP + 2 H(+). It catalyses the reaction 8-oxo-dGDP + H2O = 8-oxo-dGMP + phosphate + H(+). In terms of biological role, enzyme that can either act as an ADP-sugar pyrophosphatase in absence of diphosphate or catalyze the synthesis of ATP in presence of diphosphate. In absence of diphosphate, hydrolyzes with similar activities various modified nucleoside diphosphates such as ADP-ribose, ADP-mannose, ADP-glucose, 8-oxo-GDP and 8-oxo-dGDP. Can also hydrolyze other nucleotide sugars with low activity. In presence of diphosphate, mediates the synthesis of ATP in the nucleus by catalyzing the conversion of ADP-ribose to ATP and ribose 5-phosphate. Nuclear ATP synthesis takes place when dephosphorylated at Thr-44. Nuclear ATP generation is required for extensive chromatin remodeling events that are energy-consuming. Does not play a role in U8 snoRNA decapping activity. Binds U8 snoRNA. The chain is ADP-sugar pyrophosphatase from Mus musculus (Mouse).